Here is a 379-residue protein sequence, read N- to C-terminus: MALDLLSSYAPGLVESLLTWKGAAGLAAAVALGYIIISNLPGRQVAKPSLLQVRTGGVAFEKVAEVVADYSDSYGQTEKGELIVKDNNKIVSLANTFYDLITDGYEWGWGSGFHFSHRLPGMSFNASQLLHESRMASFLRLKPGMQVLDVGCGVGNPGRTVAACSGAVVTGITINAYQIKRAELHTKRAGLVGYFKPVQGNFCAMPFQDKSFDAAFAMDSTCHAPKLEDVYSEVFRVLKPGAYFATYEWVSTKNYDSNNPEHVKCMNSIILGNGLPNIRSWKQAEEAGKNVGFNLLTSLDMATNSPIGKPWYSVPERMVNWGLFRFHKACIRTASTLHLLPPESWKFFYILAEMAENLVKGGQWDIFTPMHLLIFQKPE.

A helical transmembrane segment spans residues 17–37; the sequence is LLTWKGAAGLAAAVALGYIII.

This sequence belongs to the class I-like SAM-binding methyltransferase superfamily. Erg6/SMT family.

Its subcellular location is the microsome membrane. The enzyme catalyses C30 botryococcene + 2 S-adenosyl-L-methionine = 3,20-dimethyl-1,2,21,22-tetradehydro-2,3,20,21-tetrahydrobotryococcene + 2 S-adenosyl-L-homocysteine + 2 H(+). In terms of biological role, converts botryococcene to mono- and dimethyl derivatives, but not to tri- and tetramethylated products. Unable to methylate cycloartenol, zymosterol or lanosterol, but can also use squalene as substrate. Methylates both C-3 and C22 positions, but only C-3 position in monomethylated squalenes. In contrast, monomethylated botryococcene occured mainly at the C-20 position yielding showacene, but also at the C-3 position yielding isoshowacene. The protein is Botryococcene C-methyltransferase (TMT-3) of Botryococcus braunii (Green alga).